Here is a 222-residue protein sequence, read N- to C-terminus: MAEKQKAVAAQEKVAISKRDPWALKKWFSVYAPPYLGGVFLAEVPAAEAQKLVKRTLEVTLYDITKDISHLPIKLRFQIHRVDGLNASTRFKGLELTRDYLRSLIRRGTSKIMAITDVKTKDGWVMRVAVLGVTTHRVGTAQKSAIRKRFIEVVTKKAAEADIGQFLKEVLEGTLAADLFIAGKKIAPMRKVEVAKIKVLRYPPEEERVAVKEVAAEAAASS.

Belongs to the eukaryotic ribosomal protein eS1 family.

The chain is Small ribosomal subunit protein eS1 from Pyrobaculum calidifontis (strain DSM 21063 / JCM 11548 / VA1).